The primary structure comprises 379 residues: Chaperone protein DnaJ 2 (379 aa).

Residues aspartate 4–glycine 68 enclose the J domain. The CR-type zinc finger occupies glycine 130–arginine 212. Zn(2+) is bound by residues cysteine 143, cysteine 146, cysteine 160, cysteine 163, cysteine 186, cysteine 189, cysteine 200, and cysteine 203. CXXCXGXG motif repeat units lie at residues cysteine 143 to glycine 150, cysteine 160 to glycine 167, cysteine 186 to alanine 193, and cysteine 200 to glycine 207. Positions arginine 351–serine 379 are disordered. The span at glycine 358–leucine 367 shows a compositional bias: polar residues. Over residues arginine 370–serine 379 the composition is skewed to basic and acidic residues.

This sequence belongs to the DnaJ family. Homodimer. It depends on Zn(2+) as a cofactor.

Its subcellular location is the cytoplasm. In terms of biological role, participates actively in the response to hyperosmotic and heat shock by preventing the aggregation of stress-denatured proteins and by disaggregating proteins, also in an autonomous, DnaK-independent fashion. Unfolded proteins bind initially to DnaJ; upon interaction with the DnaJ-bound protein, DnaK hydrolyzes its bound ATP, resulting in the formation of a stable complex. GrpE releases ADP from DnaK; ATP binding to DnaK triggers the release of the substrate protein, thus completing the reaction cycle. Several rounds of ATP-dependent interactions between DnaJ, DnaK and GrpE are required for fully efficient folding. Also involved, together with DnaK and GrpE, in the DNA replication of plasmids through activation of initiation proteins. This is Chaperone protein DnaJ 2 from Streptomyces albus G.